Here is a 106-residue protein sequence, read N- to C-terminus: Toxin-like structure LSTX-D5 (106 aa).

Positions 1–20 are cleaved as a signal peptide; sequence MMKVLVVVALLVTLISYSSS. The propeptide occupies 21 to 41; the sequence is EGIDDLETDELLSLMANEQTR. Intrachain disulfides connect C45–C60, C52–C69, C59–C85, and C71–C83.

It belongs to the neurotoxin 19 (CSTX) family. 02 (D7) subfamily. As to expression, expressed by the venom gland.

The protein resides in the secreted. This Lycosa singoriensis (Wolf spider) protein is Toxin-like structure LSTX-D5.